We begin with the raw amino-acid sequence, 105 residues long: Large ribosomal subunit protein uL24 (105 aa).

Belongs to the universal ribosomal protein uL24 family. In terms of assembly, part of the 50S ribosomal subunit.

Functionally, one of two assembly initiator proteins, it binds directly to the 5'-end of the 23S rRNA, where it nucleates assembly of the 50S subunit. Its function is as follows. One of the proteins that surrounds the polypeptide exit tunnel on the outside of the subunit. The chain is Large ribosomal subunit protein uL24 from Psychrobacter arcticus (strain DSM 17307 / VKM B-2377 / 273-4).